The sequence spans 158 residues: Large ribosomal subunit protein bL21 (158 aa).

The disordered stretch occupies residues T127–D158. The span at K131–D158 shows a compositional bias: low complexity.

This sequence belongs to the bacterial ribosomal protein bL21 family. Part of the 50S ribosomal subunit. Contacts protein L20.

Functionally, this protein binds to 23S rRNA in the presence of protein L20. The sequence is that of Large ribosomal subunit protein bL21 from Bartonella henselae (strain ATCC 49882 / DSM 28221 / CCUG 30454 / Houston 1) (Rochalimaea henselae).